A 344-amino-acid chain; its full sequence is Flavonoid 7-O-methyltransferase 1A (344 aa).

D211 is a binding site for S-adenosyl-L-methionine. The active-site Proton acceptor is the H249.

The protein belongs to the class I-like SAM-binding methyltransferase superfamily. Cation-independent O-methyltransferase family. As to quaternary structure, homodimer.

The catalysed reaction is apigenin + S-adenosyl-L-methionine = genkwanin + S-adenosyl-L-homocysteine + H(+). The enzyme catalyses luteolin + S-adenosyl-L-methionine = luteolin 7-methyl ether + S-adenosyl-L-homocysteine + H(+). It carries out the reaction quercetin + S-adenosyl-L-methionine = rhamnetin + S-adenosyl-L-homocysteine + H(+). It catalyses the reaction (2S)-naringenin + S-adenosyl-L-methionine = (2S)-sakuranetin + S-adenosyl-L-homocysteine + H(+). The catalysed reaction is kaempferol + S-adenosyl-L-methionine = kaempferol 7-methyl ether + S-adenosyl-L-homocysteine + H(+). The enzyme catalyses isorhamnetin + S-adenosyl-L-methionine = rhamnacene + S-adenosyl-L-homocysteine + H(+). It carries out the reaction 4',7,8-trihydroxyflavone + S-adenosyl-L-methionine = 4',8-dihydroxy-7-methoxyflavone + S-adenosyl-L-homocysteine. It catalyses the reaction scutellarein + S-adenosyl-L-methionine = scutellarein 7-methyl ether + S-adenosyl-L-homocysteine. Its pathway is flavonoid metabolism. In terms of biological role, flavonoid 7-O-methyltransferase involved in the biosynthesis of polymethoxylated flavonoids natural products such as pebrellin, aroma compounds which contribute to the flavor of peppermint, and exhibit pharmacological activities such as anti-allergic, anti-oxidant, antibacterial, anti-proliferative, and anti-inflammatory effects. Catalyzes S-adenosylmethionine-dependent regioselective 7-O-methylation of flavonoids; active on various hydroxylated flavonoid substrates, including luteolin (LUT), quercetin, kaempferol, isorhamnetin, apigenin (API), scutellarein (6-hydroxy-apigenin, 6-OH-API, SCU), 7,8,4'-trihydroxy-flavone and naringenin (NAR), and, with a lower efficiency, 7,8,3',4'-tetrahydroxy-flavone, taxifolin, hesperetin and genistein. The sequence is that of Flavonoid 7-O-methyltransferase 1A from Mentha piperita (Peppermint).